The following is an 837-amino-acid chain: MSEEEVHDTSSEASEVFTNQPNAFVRGVRSIFGYRKTSLTLFVILTIVVTAGLSFYDNSLELTIELPTSQLEKEILESSWLDLQNIARYPHTYGSRANDQVHDYLEEIIQDMEYDNDGEKIMFESGKGVVSYYESNNLLVRVNGSDGTLPALLLSAHYDSVPSSFGVTDDGMGVASLLGVLRFVAHNQPRRTIIFNFNNNEEFGLFGAHAFVKHPWFKQVGYFLNLEGTGAGGKAVLFRGTDYGIVKNFGGVRYPYATSIFQQGFNNHVIHSETDYKVYKEAGLRGLDLAFYKPRDKYHTGEDNIRNVSPKSLWHMMSNAIDFVQMGVVDDSEEPAVYTTFLGYFFATPISALARVNLVLLVLFPVVSTPLLFVIVKYKKWKLRVTNFLGVPLAMGLAVAVGQVGNPMLVSSHPMMVVATTTSIVVLVYYVVLNGVDWVNTSSDQKLVTMIEVSFVYWVVLVYVTWSGGDHTGEFGVTVLFFVQASTSLLGLIGWTFTRVRGGDEPLLSGEEERYGTEDERDTEKPLVEHNYDWSLQYLLIVPVSSLVVYNSGWLVLEGVNKTVQESLASEHLIYWIVVVFSQFLVLPVVPFITKFNRYIVLGLSVVAVVGVLMSMAVHPFNQGSPMKLRFIERVGQNDMVEVYGRQGFVEDVLSDLPSVKQTQAKLECEALPDGLEVCKYKSGLTPGNLTVEVTTEPRAESYGLISGAITIAAPENRMCTVHFPPDRVKAVVVGKFGNNFKAIPDGFSREKGNYIYKDRNGISQLELYKLDWNKDYHVGFEWLPDIDDEGGMRVEVECFWGDMVPAYQEVVHYSPNWVTWANKERGLVGVVKHVDV.

The Cytoplasmic portion of the chain corresponds to 1 to 36 (MSEEEVHDTSSEASEVFTNQPNAFVRGVRSIFGYRK). Residues 37–57 (TSLTLFVILTIVVTAGLSFYD) form a helical membrane-spanning segment. At 58–355 (NSLELTIELP…FATPISALAR (298 aa)) the chain is on the vacuolar side. Asn143 carries an N-linked (GlcNAc...) asparagine glycan. The Zn(2+) site is built by His157 and Asp169. Glu201 serves as the catalytic Proton acceptor. Glu202, Glu227, and His299 together coordinate Zn(2+). The chain crosses the membrane as a helical span at residues 356–376 (VNLVLLVLFPVVSTPLLFVIV). At 377-384 (KYKKWKLR) the chain is on the cytoplasmic side. The chain crosses the membrane as a helical span at residues 385-405 (VTNFLGVPLAMGLAVAVGQVG). At 406–415 (NPMLVSSHPM) the chain is on the vacuolar side. Residues 416–436 (MVVATTTSIVVLVYYVVLNGV) traverse the membrane as a helical segment. Topologically, residues 437 to 446 (DWVNTSSDQK) are cytoplasmic. Residues 447-467 (LVTMIEVSFVYWVVLVYVTWS) traverse the membrane as a helical segment. Topologically, residues 468–474 (GGDHTGE) are vacuolar. A helical membrane pass occupies residues 475–495 (FGVTVLFFVQASTSLLGLIGW). Residues 496 to 539 (TFTRVRGGDEPLLSGEEERYGTEDERDTEKPLVEHNYDWSLQYL) lie on the Cytoplasmic side of the membrane. A helical transmembrane segment spans residues 540-560 (LIVPVSSLVVYNSGWLVLEGV). N-linked (GlcNAc...) asparagine glycosylation is present at Asn561. At 561-572 (NKTVQESLASEH) the chain is on the vacuolar side. A helical membrane pass occupies residues 573 to 593 (LIYWIVVVFSQFLVLPVVPFI). Over 594-598 (TKFNR) the chain is Cytoplasmic. Residues 599 to 619 (YIVLGLSVVAVVGVLMSMAVH) traverse the membrane as a helical segment. The Vacuolar segment spans residues 620–837 (PFNQGSPMKL…LVGVVKHVDV (218 aa)). N-linked (GlcNAc...) asparagine glycosylation is present at Asn689.

The protein belongs to the peptidase M28 family. The cofactor is Zn(2+).

It localises to the vacuole membrane. In terms of biological role, may be involved in vacuolar sorting and osmoregulation. This Candida albicans (strain WO-1) (Yeast) protein is Vacuolar membrane protease.